We begin with the raw amino-acid sequence, 239 residues long: Uridylate kinase (239 aa).

13–16 lines the ATP pocket; the sequence is KLSG. Glycine 55 lines the UMP pocket. 2 residues coordinate ATP: glycine 56 and arginine 60. UMP contacts are provided by residues aspartate 75 and 136-143; that span reads TGNPFFTT. Residues threonine 163, asparagine 164, tyrosine 169, and aspartate 172 each contribute to the ATP site.

The protein belongs to the UMP kinase family. As to quaternary structure, homohexamer.

It is found in the cytoplasm. The catalysed reaction is UMP + ATP = UDP + ADP. The protein operates within pyrimidine metabolism; CTP biosynthesis via de novo pathway; UDP from UMP (UMPK route): step 1/1. Inhibited by UTP. In terms of biological role, catalyzes the reversible phosphorylation of UMP to UDP. The chain is Uridylate kinase from Neisseria gonorrhoeae (strain ATCC 700825 / FA 1090).